Reading from the N-terminus, the 338-residue chain is Limbic system-associated membrane protein (338 aa).

A signal peptide spans 1–28; sequence MVGRVQPDRKQLPLVLLRLLCLLPTGLP. 3 Ig-like C2-type domains span residues 29 to 122, 132 to 214, and 219 to 304; these read VRSV…PKTS, PKIS…VKVT, and PTIT…ASLV. N-linked (GlcNAc...) asparagine glycosylation is found at Asn-40 and Asn-66. Cys-53 and Cys-111 are oxidised to a cystine. Tyr-94 is subject to Phosphotyrosine. Asn-136 and Asn-148 each carry an N-linked (GlcNAc...) asparagine glycan. Disulfide bonds link Cys-153–Cys-197 and Cys-239–Cys-290. N-linked (GlcNAc...) asparagine glycans are attached at residues Asn-279, Asn-287, and Asn-300. Asn-315 carries the GPI-anchor amidated asparagine; alternate lipid modification. A glycan (N-linked (GlcNAc...) asparagine; alternate) is linked at Asn-315. Residues 316-338 constitute a propeptide, removed in mature form; it reads GSISLAVPLWLLAASLFCLLSKC.

Belongs to the immunoglobulin superfamily. IgLON family. Expressed mostly by neurons comprising limbic-associated cortical and subcortical regions that function in cognition, emotion, memory, and learning.

Its subcellular location is the cell membrane. Functionally, mediates selective neuronal growth and axon targeting. Contributes to the guidance of developing axons and remodeling of mature circuits in the limbic system. Essential for normal growth of the hippocampal mossy fiber projection. This Rattus norvegicus (Rat) protein is Limbic system-associated membrane protein (Lsamp).